The primary structure comprises 311 residues: Manganese-dependent ADP-ribose/CDP-alcohol diphosphatase (311 aa).

Residues Asp-17, Gln-19, Asp-64, Asn-99, His-218, His-255, and His-257 each contribute to the Zn(2+) site.

Belongs to the ADPRibase-Mn family. In terms of assembly, monomer. It depends on Mg(2+) as a cofactor.

It carries out the reaction CDP-choline + H2O = phosphocholine + CMP + 2 H(+). It catalyses the reaction ADP-D-ribose + H2O = D-ribose 5-phosphate + AMP + 2 H(+). The enzyme catalyses CDP-glycerol + H2O = sn-glycerol 3-phosphate + CMP + 2 H(+). Its function is as follows. Hydrolyzes ADP-ribose, IDP-ribose, CDP-glycerol, CDP-choline and CDP-ethanolamine, but not other non-reducing ADP-sugars or CDP-glucose. The polypeptide is Manganese-dependent ADP-ribose/CDP-alcohol diphosphatase (Arabidopsis thaliana (Mouse-ear cress)).